An 81-amino-acid polypeptide reads, in one-letter code: Conotoxin Vc6.7 (81 aa).

Residues 1–19 (MEKLTILLLVAAVLMSIQA) form the signal peptide. A propeptide spanning residues 20-44 (VNQEKHQRAKMNLLSKRKPPAERWW) is cleaved from the precursor. Disulfide bonds link Cys49-Cys63, Cys56-Cys67, and Cys62-Cys72.

It belongs to the conotoxin O2 superfamily. Expressed by the venom duct.

The protein localises to the secreted. Inhibits voltage-gated ion channels. In Conus victoriae (Queen Victoria cone), this protein is Conotoxin Vc6.7.